The chain runs to 192 residues: Epididymal-specific lipocalin-5 (192 aa).

The first 26 residues, 1 to 26 (MCSVARHMESIMLFTLLGLCVGLAAG), serve as a signal peptide directing secretion. Residues C89 and C183 are joined by a disulfide bond.

Belongs to the calycin superfamily. Lipocalin family. 2 different forms with differently processed N-termini exist. As to expression, epididymal fluid of the caudal and corpus regions (at protein level).

The protein localises to the secreted. Functionally, associates with spermatozoa in the epididymal fluid but does not bind tightly to them. Binds both all-trans and 13-cis retinoic acid. May act as a retinoid carrier protein which is required for epididymal function and/or sperm maturation. The chain is Epididymal-specific lipocalin-5 from Mus musculus (Mouse).